The primary structure comprises 619 residues: Secretogranin-2 (619 aa).

Positions 1–30 (MTESKAYRFGAVLLLIHLIFLVPGTEAASF) are cleaved as a signal peptide. Residue tyrosine 153 is modified to Sulfotyrosine. A phosphoserine mark is found at serine 176 and serine 270. The segment at 247 to 307 (VGGEDWSPME…RKESKDQLSE (61 aa)) is disordered. 2 stretches are compositionally biased toward basic and acidic residues: residues 255–286 (MEEK…EMKR) and 295–307 (EGNR…QLSE). Phosphoserine is present on residues serine 434, serine 534, serine 557, and serine 558.

It belongs to the chromogranin/secretogranin protein family. In terms of assembly, interacts with Secretogranin III/SCG3. Brain. Expression in the pituitary is restricted to the anterior lobe. Expression in the hypothalamus is observed in the neuronal cells and neurons of arcuate nucleus, supraoptic nucleus and median eminence (at protein level).

The protein resides in the secreted. Functionally, neuroendocrine protein of the granin family that regulates the biogenesis of secretory granules. This chain is Secretogranin-2 (Scg2), found in Rattus norvegicus (Rat).